The sequence spans 283 residues: Splicing factor U2af small subunit B (283 aa).

The C3H1-type 1 zinc finger occupies 12–40 (EKDRVNCPFYFKIGACRHGDRCSRLHNRP). An RRM domain is found at 44–146 (PTLLLSNMYQ…RPIIADFSPV (103 aa)). The C3H1-type 2 zinc-finger motif lies at 148 to 175 (DFREATCRQYEENSCNRGGYCNFMHVKQ). Basic residues predominate over residues 191–210 (SYRRGSRSRSRSISPRRKRE). The tract at residues 191-283 (SYRRGSRSRS…QWNRERDEGV (93 aa)) is disordered. Over residues 211–245 (HSRERERGDVRDRDRHGNGKRSSDRSERHDRDGGG) the composition is skewed to basic and acidic residues. Over residues 246–259 (RRRHGSPKRSRSPR) the composition is skewed to basic residues. A compositionally biased stretch (basic and acidic residues) spans 260 to 283 (NVREGSEERRARIEQWNRERDEGV).

This sequence belongs to the splicing factor SR family. As to quaternary structure, component of the spliceosome. Homo- and heterodimer. Interacts with RNU1, U2AF35A and SR45.

Its subcellular location is the nucleus speckle. In terms of biological role, necessary for the splicing of pre-mRNA. Probably active at the 3' splice sites. In Arabidopsis thaliana (Mouse-ear cress), this protein is Splicing factor U2af small subunit B (U2AF35B).